Reading from the N-terminus, the 87-residue chain is MQIVQGFPADAPLCALMWTCSFLLPGLQTETPYPCTSLCLSSSQSAHPPLPVRVFSAESGYGIPFCAEPCSRVTVCHLQAVPVCMPV.

Expressed in placenta and testis.

In Homo sapiens (Human), this protein is Down syndrome critical region protein 10 (DSCR10).